We begin with the raw amino-acid sequence, 598 residues long: Rho-related protein racA (598 aa).

11–17 (DGAVGKS) provides a ligand contact to GTP. The Effector region signature appears at 32–40 (YVPTVFDNY). GTP is bound by residues 57 to 61 (DTAGQ) and 115 to 118 (TKND). A disordered region spans residues 175–210 (ASAKKKGGFFSSSSSSSSSSSSKSSEKSVPIPPVMP). The span at 182–197 (GFFSSSSSSSSSSSSK) shows a compositional bias: low complexity. 2 consecutive BTB domains span residues 239-344 (SDVK…NYLD) and 405-472 (SDIQ…PIEE).

In the N-terminal section; belongs to the small GTPase superfamily. Rho family. In terms of assembly, interacts with pakB.

The chain is Rho-related protein racA (racA) from Dictyostelium discoideum (Social amoeba).